We begin with the raw amino-acid sequence, 179 residues long: Large ribosomal subunit protein uL5 (179 aa).

Belongs to the universal ribosomal protein uL5 family. In terms of assembly, part of the 50S ribosomal subunit; part of the 5S rRNA/L5/L18/L25 subcomplex. Contacts the 5S rRNA and the P site tRNA. Forms a bridge to the 30S subunit in the 70S ribosome.

In terms of biological role, this is one of the proteins that bind and probably mediate the attachment of the 5S RNA into the large ribosomal subunit, where it forms part of the central protuberance. In the 70S ribosome it contacts protein S13 of the 30S subunit (bridge B1b), connecting the 2 subunits; this bridge is implicated in subunit movement. Contacts the P site tRNA; the 5S rRNA and some of its associated proteins might help stabilize positioning of ribosome-bound tRNAs. The polypeptide is Large ribosomal subunit protein uL5 (Bacillus velezensis (strain DSM 23117 / BGSC 10A6 / LMG 26770 / FZB42) (Bacillus amyloliquefaciens subsp. plantarum)).